Reading from the N-terminus, the 113-residue chain is Endoribonuclease SymE (113 aa).

The 46-residue stretch at 29–74 folds into the SpoVT-AbrB domain; sequence SRYPDYSRIPAITLKGQWLEAAGFATGTAIDVKVMEGCIVLTAQPP.

This sequence belongs to the SymE family.

The protein localises to the cytoplasm. In terms of biological role, involved in the degradation and recycling of damaged RNA. It is itself a target for degradation by the ATP-dependent protease Lon. The protein is Endoribonuclease SymE of Escherichia coli O1:K1 / APEC.